The chain runs to 159 residues: 2-C-methyl-D-erythritol 2,4-cyclodiphosphate synthase (159 aa).

2 residues coordinate a divalent metal cation: Asp10 and His12. Residues Asp10 to His12 and His36 to Ser37 contribute to the 4-CDP-2-C-methyl-D-erythritol 2-phosphate site. His44 is an a divalent metal cation binding site. 4-CDP-2-C-methyl-D-erythritol 2-phosphate is bound by residues Asp58 to Gly60, Thr134 to Glu137, Phe141, and Arg144.

The protein belongs to the IspF family. Homotrimer. A divalent metal cation is required as a cofactor.

It carries out the reaction 4-CDP-2-C-methyl-D-erythritol 2-phosphate = 2-C-methyl-D-erythritol 2,4-cyclic diphosphate + CMP. The protein operates within isoprenoid biosynthesis; isopentenyl diphosphate biosynthesis via DXP pathway; isopentenyl diphosphate from 1-deoxy-D-xylulose 5-phosphate: step 4/6. Involved in the biosynthesis of isopentenyl diphosphate (IPP) and dimethylallyl diphosphate (DMAPP), two major building blocks of isoprenoid compounds. Catalyzes the conversion of 4-diphosphocytidyl-2-C-methyl-D-erythritol 2-phosphate (CDP-ME2P) to 2-C-methyl-D-erythritol 2,4-cyclodiphosphate (ME-CPP) with a corresponding release of cytidine 5-monophosphate (CMP). The polypeptide is 2-C-methyl-D-erythritol 2,4-cyclodiphosphate synthase (Cereibacter sphaeroides (strain ATCC 17029 / ATH 2.4.9) (Rhodobacter sphaeroides)).